Consider the following 451-residue polypeptide: Interferon-related developmental regulator 1 (451 aa).

Over residues 1 to 10 the composition is skewed to basic residues; that stretch reads MPKNKKRNTP. The tract at residues 1–69 is disordered; the sequence is MPKNKKRNTP…PSSFAEDGPE (69 aa). A compositionally biased stretch (low complexity) spans 23-33; sequence AAAATAATAGG. A compositionally biased stretch (polar residues) spans 49 to 61; it reads ETMSHCSGYSDPS.

Belongs to the IFRD family. Interacts with PSIP1/LEDGF. Expressed in a variety of tissues.

Its function is as follows. Could play a role in regulating gene activity in the proliferative and/or differentiative pathways induced by NGF. May be an autocrine factor that attenuates or amplifies the initial ligand-induced signal. The protein is Interferon-related developmental regulator 1 (IFRD1) of Homo sapiens (Human).